The chain runs to 530 residues: Probable histone-arginine methyltransferase CARMER (530 aa).

An SAM-dependent MTase PRMT-type domain is found at 141–450; the sequence is ASQYFQFYGY…QSYDVTIDLH (310 aa). S-adenosyl-L-methionine contacts are provided by Gln154, Arg163, Gly187, Glu209, Glu238, and Thr266. Arg501 bears the Asymmetric dimethylarginine; by autocatalysis mark.

Belongs to the class I-like SAM-binding methyltransferase superfamily. Protein arginine N-methyltransferase family. Homodimer. Interacts with EcR. Post-translationally, the dimethylated protein is the major form. As to expression, present ubiquitously (at protein level). Expressed in the imaginal disks and in larval brains, and to a much lesser degree in the polytene larval tissue such as salivary glands.

It is found in the cytoplasm. It localises to the nucleus. It catalyses the reaction L-arginyl-[protein] + 2 S-adenosyl-L-methionine = N(omega),N(omega)-dimethyl-L-arginyl-[protein] + 2 S-adenosyl-L-homocysteine + 2 H(+). In terms of biological role, methylates (mono- and asymmetric dimethylation) the guanidino nitrogens of arginyl residues in proteins. May methylate histone H3 at 'Arg-17' and activate transcription via chromatin remodeling. Coordinates ecdysone-mediated expression of cell death genes. The protein is Probable histone-arginine methyltransferase CARMER (Art4) of Drosophila melanogaster (Fruit fly).